Consider the following 633-residue polypeptide: Extracellular metalloproteinase mep (633 aa).

Residues 1–18 form the signal peptide; that stretch reads MRLLSLAGAMALPLCVLA. A propeptide spanning residues 19 to 244 is cleaved from the precursor; the sequence is HPTHRTRGIA…IHGVVDYISD (226 aa). An N-linked (GlcNAc...) asparagine glycan is attached at asparagine 326. Histidine 428 contacts Zn(2+). Glutamate 429 is a catalytic residue. Histidine 432 is a Zn(2+) binding site. N-linked (GlcNAc...) asparagine glycosylation is present at asparagine 514.

The protein belongs to the peptidase M36 family. Requires Zn(2+) as cofactor.

The protein resides in the secreted. Secreted metalloproteinase that allows assimilation of proteinaceous substrates. The sequence is that of Extracellular metalloproteinase mep (mep) from Aspergillus terreus (strain NIH 2624 / FGSC A1156).